Consider the following 278-residue polypeptide: Achaete-scute homolog 5 (278 aa).

Residues 1 to 66 (MPMGAAERGA…GPFGGGLALG (66 aa)) form a disordered region. The 53-residue stretch at 155–207 (AFIQKRNERERQRVKCVNEGYARLRGHLPGALAEKRLSKVETLRAAIRYIKYL) folds into the bHLH domain. The disordered stretch occupies residues 214-278 (APDGSTPPAS…PFLESEESWH (65 aa)). The segment covering 230 to 239 (GPCPAPPATP) has biased composition (pro residues). Positions 240–249 (RPDRPGDGEA) are enriched in basic and acidic residues. Residues 252–271 (PSSLVPESSESSCFSPSPFL) show a composition bias toward low complexity.

Interacts with transcription factor TCF3/E12.

It localises to the nucleus. Functionally, transcription factor. Probably binds E-box motifs 5'-CANNTG-3' in complex with transcription factor TCF3/E12. Negatively modulates transcription of target genes such as CDH1/E-cadherin, perhaps by recruiting the PRC2 repressive complex to regulatory elements. Regulates ameloblast development and tooth germ growth, perhaps acting by positively modulating migration of inner enamel epithelium (IEE) cells. Plays a role in enamel formation. The chain is Achaete-scute homolog 5 (ASCL5) from Homo sapiens (Human).